The primary structure comprises 511 residues: Glucans biosynthesis protein G (511 aa).

The N-terminal stretch at 1-22 (MMKMRWLSAAVMLTLYTSSSWA) is a signal peptide.

The protein belongs to the OpgD/OpgG family.

It is found in the periplasm. It functions in the pathway glycan metabolism; osmoregulated periplasmic glucan (OPG) biosynthesis. In terms of biological role, involved in the biosynthesis of osmoregulated periplasmic glucans (OPGs). The polypeptide is Glucans biosynthesis protein G (Escherichia coli O8 (strain IAI1)).